Consider the following 219-residue polypeptide: Octanoyltransferase (219 aa).

A BPL/LPL catalytic domain is found at T31–A206. Residues R70–H77, S137–G139, and G150–A152 contribute to the substrate site. C168 serves as the catalytic Acyl-thioester intermediate.

It belongs to the LipB family.

The protein resides in the cytoplasm. The enzyme catalyses octanoyl-[ACP] + L-lysyl-[protein] = N(6)-octanoyl-L-lysyl-[protein] + holo-[ACP] + H(+). The protein operates within protein modification; protein lipoylation via endogenous pathway; protein N(6)-(lipoyl)lysine from octanoyl-[acyl-carrier-protein]: step 1/2. Catalyzes the transfer of endogenously produced octanoic acid from octanoyl-acyl-carrier-protein onto the lipoyl domains of lipoate-dependent enzymes. Lipoyl-ACP can also act as a substrate although octanoyl-ACP is likely to be the physiological substrate. The protein is Octanoyltransferase of Sodalis glossinidius (strain morsitans).